Here is a 227-residue protein sequence, read N- to C-terminus: Ribose-5-phosphate isomerase A (227 aa).

Substrate contacts are provided by residues 26–29 (TGST), 82–85 (DGAD), and 95–98 (KGGG). E104 functions as the Proton acceptor in the catalytic mechanism. K122 is a binding site for substrate.

It belongs to the ribose 5-phosphate isomerase family. Homodimer.

It catalyses the reaction aldehydo-D-ribose 5-phosphate = D-ribulose 5-phosphate. It participates in carbohydrate degradation; pentose phosphate pathway; D-ribose 5-phosphate from D-ribulose 5-phosphate (non-oxidative stage): step 1/1. In terms of biological role, catalyzes the reversible conversion of ribose-5-phosphate to ribulose 5-phosphate. The chain is Ribose-5-phosphate isomerase A from Streptococcus pyogenes serotype M1.